Consider the following 397-residue polypeptide: Elongation factor Tu (397 aa).

Residues 10–206 (KPHVNIGTIG…EVDAYIPTPE (197 aa)) form the tr-type G domain. Positions 19–26 (GHVDHGKT) are G1. Residue 19 to 26 (GHVDHGKT) participates in GTP binding. T26 is a Mg(2+) binding site. The tract at residues 60 to 64 (GITIN) is G2. The G3 stretch occupies residues 81–84 (DCPG). GTP is bound by residues 81-85 (DCPGH) and 136-139 (NKAD). Residues 136–139 (NKAD) are G4. Residues 174-176 (SAL) form a G5 region.

The protein belongs to the TRAFAC class translation factor GTPase superfamily. Classic translation factor GTPase family. EF-Tu/EF-1A subfamily. In terms of assembly, monomer.

It localises to the cytoplasm. It carries out the reaction GTP + H2O = GDP + phosphate + H(+). Its function is as follows. GTP hydrolase that promotes the GTP-dependent binding of aminoacyl-tRNA to the A-site of ribosomes during protein biosynthesis. The protein is Elongation factor Tu of Clostridium acetobutylicum (strain ATCC 824 / DSM 792 / JCM 1419 / IAM 19013 / LMG 5710 / NBRC 13948 / NRRL B-527 / VKM B-1787 / 2291 / W).